The sequence spans 211 residues: Nucleoside diphosphate kinase homolog 5 (211 aa).

The interval 13-145 (EKTLALIKPD…EREIRFMFPA (133 aa)) is NDK.

This sequence belongs to the NDK family. As to quaternary structure, component of the axonemal radial spoke complex 1 (RS1), at least composed of spoke head proteins RSPH1, RSPH3, RSPH9 and the cilia-specific component RSPH4A or sperm-specific component RSPH6A, spoke stalk proteins RSPH14, DNAJB13, DYDC1, ROPN1L and NME5, and the anchor protein IQUB. Interacts with IQUB. In terms of tissue distribution, expressed in the trachea, ependymal cells and oviduct (at protein level). Expressed predominantly in germ cells of the testis. Not expressed in testicular somatic cells.

It is found in the cell projection. It localises to the cilium. The protein resides in the cytoplasm. Its subcellular location is the cytoskeleton. The protein localises to the flagellum axoneme. Its function is as follows. Functions as part of axonemal radial spoke complexes that play an important part in the motility of sperm and cilia. Does not seem to have nucleoside diphosphate kinase (NDPK) activity. Confers protection from cell death by BAX and alters the cellular levels of several antioxidant enzymes including GPX5. May play a role in spermiogenesis by increasing the ability of late-stage spermatids to eliminate reactive oxygen species. The protein is Nucleoside diphosphate kinase homolog 5 (Nme5) of Mus musculus (Mouse).